Reading from the N-terminus, the 527-residue chain is Peptide chain release factor 3 (527 aa).

The 269-residue stretch at 9–277 (AKRRTFAIIS…AVVDWAPRPL (269 aa)) folds into the tr-type G domain. GTP-binding positions include 18-25 (SHPDAGKT), 86-90 (DTPGH), and 140-143 (NKLD).

Belongs to the TRAFAC class translation factor GTPase superfamily. Classic translation factor GTPase family. PrfC subfamily.

The protein localises to the cytoplasm. Its function is as follows. Increases the formation of ribosomal termination complexes and stimulates activities of RF-1 and RF-2. It binds guanine nucleotides and has strong preference for UGA stop codons. It may interact directly with the ribosome. The stimulation of RF-1 and RF-2 is significantly reduced by GTP and GDP, but not by GMP. This is Peptide chain release factor 3 from Pseudomonas putida (strain W619).